The chain runs to 425 residues: uncharacterized protein (425 aa).

This sequence to K.pneumoniae SorE.

This is an uncharacterized protein from Escherichia coli (strain K12).